The sequence spans 468 residues: UDP-N-acetylmuramate--L-alanine ligase (468 aa).

122–128 serves as a coordination point for ATP; it reads GSHGKTT.

It belongs to the MurCDEF family.

It is found in the cytoplasm. The catalysed reaction is UDP-N-acetyl-alpha-D-muramate + L-alanine + ATP = UDP-N-acetyl-alpha-D-muramoyl-L-alanine + ADP + phosphate + H(+). It participates in cell wall biogenesis; peptidoglycan biosynthesis. Its function is as follows. Cell wall formation. The chain is UDP-N-acetylmuramate--L-alanine ligase from Synechococcus sp. (strain CC9902).